The chain runs to 188 residues: uncharacterized protein (188 aa).

S14 bears the Phosphoserine mark. The disordered stretch occupies residues 165–188; it reads RQAMAAKRNRFRKNVRKLPNKKKH. Positions 171-188 are enriched in basic residues; that stretch reads KRNRFRKNVRKLPNKKKH.

It localises to the nucleus. The protein resides in the nucleolus. This is an uncharacterized protein from Schizosaccharomyces pombe (strain 972 / ATCC 24843) (Fission yeast).